Consider the following 93-residue polypeptide: Defensin-like protein 229 (93 aa).

The signal sequence occupies residues 1–19 (MKSTTLFMVSCVLIFCVLS). Intrachain disulfides connect cysteine 38/cysteine 93, cysteine 48/cysteine 72, cysteine 56/cysteine 84, and cysteine 70/cysteine 86.

The protein belongs to the DEFL family. Flower buds.

The protein localises to the secreted. This chain is Defensin-like protein 229 (SCRL27), found in Arabidopsis thaliana (Mouse-ear cress).